An 84-amino-acid chain; its full sequence is PAMP-induced secreted peptide 2 (84 aa).

A signal peptide spans 1-24 (MMMNKNVLSSILFFMLIGSVLVES). The interval 50–84 (KDSGPSPGEGHKVVDRKDTFRFVKHSGPSPSGPGH) is disordered. The span at 58–70 (EGHKVVDRKDTFR) shows a compositional bias: basic and acidic residues. A 4-hydroxyproline mark is found at Pro77 and Pro79.

Post-translationally, contains 4-hydroxyproline; hydroxylated on Pro-77 and Pro-79.

The protein localises to the secreted. Its subcellular location is the extracellular space. The protein resides in the apoplast. Functionally, endogenous secreted peptide that acts as elicitor of immune response and positive regulator of defense response. Amplifies the immune response triggered by flg22, the active epitope of bacterial flagellin. Acts as a negative regulator of root growth. This is PAMP-induced secreted peptide 2 from Arabidopsis thaliana (Mouse-ear cress).